A 221-amino-acid polypeptide reads, in one-letter code: Endo-1,4-beta-xylanase A (221 aa).

The N-terminal stretch at 1-16 (MKFFATIAALVVGAVA) is a signal peptide. The 193-residue stretch at 29–221 (PMLIERAGPG…GTGSASVTVS (193 aa)) folds into the GH11 domain. The Nucleophile role is filled by E114. E208 acts as the Proton donor in catalysis.

It belongs to the glycosyl hydrolase 11 (cellulase G) family.

The protein localises to the secreted. It carries out the reaction Endohydrolysis of (1-&gt;4)-beta-D-xylosidic linkages in xylans.. Its pathway is glycan degradation; xylan degradation. Functionally, endo-1,4-beta-xylanase involved in the hydrolysis of xylan, a major structural heterogeneous polysaccharide found in plant biomass representing the second most abundant polysaccharide in the biosphere, after cellulose. This chain is Endo-1,4-beta-xylanase A (xynA), found in Aureobasidium pullulans (Black yeast).